Consider the following 369-residue polypeptide: Caffeine synthase 1 (369 aa).

Tyrosine 24 provides a ligand contact to S-adenosyl-L-homocysteine. Caffeine is bound at residue threonine 31. S-adenosyl-L-homocysteine contacts are provided by cysteine 66, asparagine 71, aspartate 103, leucine 104, serine 138, and phenylalanine 139. Caffeine is bound by residues tyrosine 156, histidine 159, and tryptophan 160. Asparagine 177 serves as a coordination point for Mg(2+). Arginine 225 contacts caffeine. Residues aspartate 263, phenylalanine 265, and asparagine 266 each contribute to the Mg(2+) site. Caffeine is bound at residue phenylalanine 321.

The protein belongs to the methyltransferase superfamily. Type-7 methyltransferase family. The cofactor is Mg(2+).

The catalysed reaction is theobromine + S-adenosyl-L-methionine = caffeine + S-adenosyl-L-homocysteine + H(+). The enzyme catalyses 7-methylxanthine + S-adenosyl-L-methionine = theobromine + S-adenosyl-L-homocysteine + H(+). Its pathway is alkaloid biosynthesis. Involved in the biosynthesis of caffeine. Catalyzes the conversion of 7-methylxanthine (7mX) to theobromine and of theobromine to caffeine. The sequence is that of Caffeine synthase 1 from Camellia crassicolumna (Evergreen tea).